Here is a 339-residue protein sequence, read N- to C-terminus: Anthranilate phosphoribosyltransferase (339 aa).

Residues glycine 80, 83–84 (GD), threonine 88, 90–93 (NIST), 108–116 (KHGNRAMSS), and serine 120 contribute to the 5-phospho-alpha-D-ribose 1-diphosphate site. Glycine 80 contributes to the anthranilate binding site. A Mg(2+)-binding site is contributed by serine 92. Asparagine 111 lines the anthranilate pocket. Arginine 166 is a binding site for anthranilate. Mg(2+)-binding residues include aspartate 225 and glutamate 226.

The protein belongs to the anthranilate phosphoribosyltransferase family. As to quaternary structure, homodimer. Requires Mg(2+) as cofactor.

The enzyme catalyses N-(5-phospho-beta-D-ribosyl)anthranilate + diphosphate = 5-phospho-alpha-D-ribose 1-diphosphate + anthranilate. It functions in the pathway amino-acid biosynthesis; L-tryptophan biosynthesis; L-tryptophan from chorismate: step 2/5. Catalyzes the transfer of the phosphoribosyl group of 5-phosphorylribose-1-pyrophosphate (PRPP) to anthranilate to yield N-(5'-phosphoribosyl)-anthranilate (PRA). The chain is Anthranilate phosphoribosyltransferase from Chloroflexus aurantiacus (strain ATCC 29366 / DSM 635 / J-10-fl).